Here is a 406-residue protein sequence, read N- to C-terminus: MTTPANAQNASKTWELSLYELHRTPQEAIMDGTEIAVSPRSLHSELMCPICLDMLKNTMTTKECLHRFCSDCIVTALRSGNKECPTCRKKLVSKRSLRPDPNFDALISKIYPSREEYEAHQDRVLIRLSRLHNQQALSSSIEEGLRMQAMHRAQRVRRPMPGSDQTATMSGGEGEPGEGEGDGEDVSSDSAPDSAPGPAPKRPRGAGAGASSVGTGGGAAGGACGGAGSEDSGDRGGTLGGGTLGPPSPPGAPSPPEPGGEIELVFRPHPLLVEKGEYCQTRYVKTTGNATVDHLSKYLALRIALERRQQQETTEPGGPGGGASDTGGPDGGGGERGVAGGGEGPEEPALPSLEGVSEKQYTIYIAPGGGAFTTLNGSLTLELVNEKFWKVSRPLELCYAPTKDPK.

Threonine 24 is subject to Phosphothreonine. The interval 30 to 234 (MDGTEIAVSP…GGAGSEDSGD (205 aa)) is necessary for transcriptional repression. Phosphoserine is present on serine 38. The RING-type zinc-finger motif lies at 48 to 88 (CPICLDMLKNTMTTKECLHRFCSDCIVTALRSGNKECPTCR). Residues serine 140, serine 187, and serine 190 each carry the phosphoserine modification. Disordered regions lie at residues 151 to 263 (HRAQ…GEIE) and 309 to 354 (QQQE…PSLE). Residues 175 to 187 (EPGEGEGDGEDVS) are compositionally biased toward acidic residues. The Nuclear localization signal signature appears at 201–204 (KRPR). Residues 214 to 228 (GTGGGAAGGACGGAG) are compositionally biased toward gly residues. Threonine 215 is subject to Phosphothreonine. 2 positions are modified to phosphoserine: serine 229 and serine 232. The necessary for interaction with CBX2 stretch occupies residues 230 to 406 (EDSGDRGGTL…LCYAPTKDPK (177 aa)). The segment covering 235 to 244 (RGGTLGGGTL) has biased composition (gly residues). A compositionally biased stretch (pro residues) spans 246 to 258 (PPSPPGAPSPPEP). Phosphoserine occurs at positions 248 and 254. Over residues 317–343 (GGPGGGASDTGGPDGGGGERGVAGGGE) the composition is skewed to gly residues.

Component of chromatin-associated Polycomb (PcG) complexes. Part of the E2F6.com-1 complex in G0 phase composed of E2F6, MGA, MAX, TFDP1, CBX3, BAT8, EUHMTASE1, RING1, RNF2/RING2 MBLR, L3MBTL2 and YAF2. Interacts with CBX2 and PCGF6. Component of a PRC1-like complex. Component of repressive BCOR complex containing Polycomb group subcomplex at least composed of RYBP, PCGF1, BCOR and RNF2/RING2. Interacts with PHC2, PCGF2, RNF2; CBX6, CBX7 and CBX8. Interacts with BMI1. Interacts with MN1. Interacts with USP26.

It is found in the nucleus speckle. It catalyses the reaction S-ubiquitinyl-[E2 ubiquitin-conjugating enzyme]-L-cysteine + [acceptor protein]-L-lysine = [E2 ubiquitin-conjugating enzyme]-L-cysteine + N(6)-ubiquitinyl-[acceptor protein]-L-lysine.. It participates in protein modification; protein ubiquitination. Constitutes one of the E3 ubiquitin-protein ligases that mediate monoubiquitination of 'Lys-119' of histone H2A, thereby playing a central role in histone code and gene regulation. H2A 'Lys-119' ubiquitination gives a specific tag for epigenetic transcriptional repression and participates in X chromosome inactivation of female mammals. Essential component of a Polycomb group (PcG) multiprotein PRC1-like complex, a complex class required to maintain the transcriptionally repressive state of many genes, including Hox genes, throughout development. PcG PRC1 complex acts via chromatin remodeling and modification of histones, rendering chromatin heritably changed in its expressibility. Compared to RNF2/RING2, it does not have the main E3 ubiquitin ligase activity on histone H2A, and it may rather act as a modulator of RNF2/RING2 activity. This chain is E3 ubiquitin-protein ligase RING1, found in Mus musculus (Mouse).